The following is a 157-amino-acid chain: Ribosomal RNA large subunit methyltransferase H (157 aa).

Residues Leu74, Gly106, and 125–130 (LSDMTL) each bind S-adenosyl-L-methionine.

Belongs to the RNA methyltransferase RlmH family. Homodimer.

It is found in the cytoplasm. It catalyses the reaction pseudouridine(1915) in 23S rRNA + S-adenosyl-L-methionine = N(3)-methylpseudouridine(1915) in 23S rRNA + S-adenosyl-L-homocysteine + H(+). Its function is as follows. Specifically methylates the pseudouridine at position 1915 (m3Psi1915) in 23S rRNA. This Desulfovibrio desulfuricans (strain ATCC 27774 / DSM 6949 / MB) protein is Ribosomal RNA large subunit methyltransferase H.